The sequence spans 219 residues: Large ribosomal subunit protein uL16y (219 aa).

The protein belongs to the universal ribosomal protein uL16 family. As to quaternary structure, component of the small ribosomal subunit. Mature ribosomes consist of a small (40S) and a large (60S) subunit. The 40S subunit contains about 33 different proteins and 1 molecule of RNA (18S). The 60S subunit contains about 49 different proteins and 3 molecules of RNA (25S, 5.8S and 5S).

This is Large ribosomal subunit protein uL16y (SG12) from Oryza sativa subsp. japonica (Rice).